Consider the following 183-residue polypeptide: Transmembrane protein 52B (183 aa).

Residues 1–24 form the signal peptide; sequence MGVRVHVVAASALLYFILLSGTRC. Residues 40 to 60 traverse the membrane as a helical segment; sequence VHLWYIWLLVVIGALLLLCGL. Positions 158–183 are disordered; that stretch reads DLPPVPEEKQLPPTEKESTRIVDSWN. The span at 163–177 shows a compositional bias: basic and acidic residues; the sequence is PEEKQLPPTEKESTR.

Its subcellular location is the membrane. This is Transmembrane protein 52B (TMEM52B) from Homo sapiens (Human).